A 334-amino-acid polypeptide reads, in one-letter code: Nucleoid-associated protein YpsIP31758_2721 (334 aa).

It belongs to the YejK family.

The protein localises to the cytoplasm. The protein resides in the nucleoid. This is Nucleoid-associated protein YpsIP31758_2721 from Yersinia pseudotuberculosis serotype O:1b (strain IP 31758).